The following is a 77-amino-acid chain: UPF0291 protein Bsph_1689 (77 aa).

The protein belongs to the UPF0291 family.

The protein localises to the cytoplasm. This is UPF0291 protein Bsph_1689 from Lysinibacillus sphaericus (strain C3-41).